The sequence spans 278 residues: Digeranylgeranylglyceryl phosphate synthase (278 aa).

8 helical membrane-spanning segments follow: residues Leu12 to Phe32, Leu34 to Gly54, Leu92 to Leu112, Ile129 to Ala149, Ile153 to Ile173, Phe204 to Ile224, Tyr226 to Phe246, and Ser257 to Phe277.

It belongs to the UbiA prenyltransferase family. DGGGP synthase subfamily. Mg(2+) serves as cofactor.

The protein localises to the cell membrane. It catalyses the reaction sn-3-O-(geranylgeranyl)glycerol 1-phosphate + (2E,6E,10E)-geranylgeranyl diphosphate = 2,3-bis-O-(geranylgeranyl)-sn-glycerol 1-phosphate + diphosphate. The protein operates within membrane lipid metabolism; glycerophospholipid metabolism. Its function is as follows. Prenyltransferase that catalyzes the transfer of the geranylgeranyl moiety of geranylgeranyl diphosphate (GGPP) to the C2 hydroxyl of (S)-3-O-geranylgeranylglyceryl phosphate (GGGP). This reaction is the second ether-bond-formation step in the biosynthesis of archaeal membrane lipids. The chain is Digeranylgeranylglyceryl phosphate synthase from Methanococcus maripaludis (strain DSM 14266 / JCM 13030 / NBRC 101832 / S2 / LL).